Reading from the N-terminus, the 66-residue chain is Hirudin-PA (66 aa).

The tract at residues 1-3 is interaction with thrombin active site; the sequence is ITY. Disulfide bonds link cysteine 6–cysteine 14, cysteine 16–cysteine 28, and cysteine 22–cysteine 39. The disordered stretch occupies residues 39–66; the sequence is CVTGEGTPKPQSHNQGDFEPIPEDAYDE. A glycan (O-linked (GalNAc...) threonine) is linked at threonine 45. Positions 55–66 are interaction with fibrinogen-binding exosite of thrombin; sequence DFEPIPEDAYDE. Tyrosine 64 bears the Sulfotyrosine mark.

This sequence belongs to the protease inhibitor I14 (hirudin) family.

The protein resides in the secreted. Functionally, hirudin is a potent thrombin-specific protease inhibitor. It forms a stable non-covalent complex with alpha-thrombin, thereby abolishing its ability to cleave fibrinogen. The sequence is that of Hirudin-PA from Hirudo medicinalis (Medicinal leech).